The following is a 231-amino-acid chain: Octanoyl-[acyl-carrier-protein]:protein N-octanoyltransferase LIPT2, mitochondrial (231 aa).

Residues 41–224 enclose the BPL/LPL catalytic domain; it reads GTKAGVLLVC…AFKETFKCTL (184 aa). K43 bears the N6-succinyllysine mark. Substrate-binding positions include 85-92, 154-156, and 167-169; these read RGGLATFH, AIG, and GLA. C185 (acyl-thioester intermediate) is an active-site residue.

Belongs to the LipB family.

The protein localises to the mitochondrion. It carries out the reaction octanoyl-[ACP] + L-lysyl-[protein] = N(6)-octanoyl-L-lysyl-[protein] + holo-[ACP] + H(+). Its pathway is protein modification; protein lipoylation via endogenous pathway; protein N(6)-(lipoyl)lysine from octanoyl-[acyl-carrier-protein]: step 1/2. In terms of biological role, catalyzes the transfer of endogenously produced octanoic acid from octanoyl-acyl-carrier-protein onto the lipoyl domains of lipoate-dependent enzymes such as the protein H of the glycine cleavage system (GCSH). Lipoyl-ACP can also act as a substrate although octanoyl-ACP is likely to be the physiological substrate. The chain is Octanoyl-[acyl-carrier-protein]:protein N-octanoyltransferase LIPT2, mitochondrial from Mus musculus (Mouse).